A 178-amino-acid polypeptide reads, in one-letter code: Cytochrome c-type biogenesis protein CcmE (178 aa).

Over 1–8 (MNPRRKKR) the chain is Cytoplasmic. Residues 9–29 (LAIVGSILIGIGVVSGLVLYA) traverse the membrane as a helical; Signal-anchor for type II membrane protein segment. The Periplasmic segment spans residues 30-178 (LSQNIDLFFT…QLESKKTNSY (149 aa)). The heme site is built by H143 and Y147. The disordered stretch occupies residues 154–178 (EAAGQKHDKATYSDKQLESKKTNSY). The span at 157–178 (GQKHDKATYSDKQLESKKTNSY) shows a compositional bias: basic and acidic residues.

This sequence belongs to the CcmE/CycJ family.

It is found in the cell inner membrane. Its function is as follows. Heme chaperone required for the biogenesis of c-type cytochromes. Transiently binds heme delivered by CcmC and transfers the heme to apo-cytochromes in a process facilitated by CcmF and CcmH. This Colwellia psychrerythraea (strain 34H / ATCC BAA-681) (Vibrio psychroerythus) protein is Cytochrome c-type biogenesis protein CcmE.